The primary structure comprises 170 residues: Elicitin-like protein 1 (170 aa).

A signal peptide spans 1-19; that stretch reads MFSKTLVVLAAVAAVTVNG. Cystine bridges form between Cys-25-Cys-91, Cys-47-Cys-76, and Cys-71-Cys-118. The disordered stretch occupies residues 122–170; that stretch reads GGGSTPTTAPPTSTTPTTAPPTGTTPTTAPPAGTTPGVTPSPTTPKPAC. Residues 126–162 show a composition bias toward low complexity; the sequence is TPTTAPPTSTTPTTAPPTGTTPTTAPPAGTTPGVTPS.

The protein belongs to the elicitin family.

The protein resides in the secreted. Induces local and distal defense responses (incompatible hypersensitive reaction) in plants from the solanaceae and cruciferae families. Elicits leaf necrosis and causes the accumulation of pathogenesis-related proteins. Might interact with the lipidic molecules of the plasma membrane. The polypeptide is Elicitin-like protein 1 (POD-1) (Pythium oligandrum (Mycoparasitic fungus)).